A 251-amino-acid polypeptide reads, in one-letter code: Cell division protein ZapD (251 aa).

It belongs to the ZapD family. In terms of assembly, interacts with FtsZ.

It localises to the cytoplasm. Functionally, cell division factor that enhances FtsZ-ring assembly. Directly interacts with FtsZ and promotes bundling of FtsZ protofilaments, with a reduction in FtsZ GTPase activity. The chain is Cell division protein ZapD from Paraburkholderia phymatum (strain DSM 17167 / CIP 108236 / LMG 21445 / STM815) (Burkholderia phymatum).